A 366-amino-acid polypeptide reads, in one-letter code: Peroxisomal (S)-2-hydroxy-acid oxidase GLO4 (366 aa).

The FMN hydroxy acid dehydrogenase domain occupies 1–360 (MEDNLPVNVR…TRSHVMTEGD (360 aa)). Position 27 (Tyr-27) interacts with a 2-oxocarboxylate. Residues 80 to 82 (PTG), Ser-109, 130 to 132 (QLY), and Thr-158 contribute to the FMN site. Tyr-132 is a binding site for a 2-oxocarboxylate. Position 167 (Arg-167) interacts with a 2-oxocarboxylate. Residues Lys-231 and Ser-253 each coordinate FMN. His-255 acts as the Proton acceptor in catalysis. Arg-258 serves as a coordination point for a 2-oxocarboxylate. FMN-binding positions include 286 to 290 (DGGIR) and 309 to 310 (GR). The Microbody targeting signal signature appears at 364-366 (SLL).

The protein belongs to the FMN-dependent alpha-hydroxy acid dehydrogenase family. In terms of assembly, homotetramer. Binds to CATB and CATC; these interactions are disturbed by alpha-hydroxy-2-pyridinemethanesulfonic acid (HPMS) and salicylic acid (SA). It depends on FMN as a cofactor.

It localises to the peroxisome. It catalyses the reaction a (2S)-2-hydroxycarboxylate + O2 = a 2-oxocarboxylate + H2O2. It participates in lipid metabolism; fatty acid metabolism. In terms of biological role, oxidase that catalyzes the oxidation of a broad range of 2-hydroxyacids to the corresponding 2-oxoacids, with a reduction of O2 to H2O2. May be involved in a general medium- and long-chain fatty acid catabolic pathway such as alpha-oxidation. In Oryza sativa subsp. japonica (Rice), this protein is Peroxisomal (S)-2-hydroxy-acid oxidase GLO4 (GLO4).